Reading from the N-terminus, the 1154-residue chain is Voltage-gated inwardly rectifying potassium channel KCNH2 (1154 aa).

Topologically, residues 1–403 (MPVRRGHVAP…RIHRWTILHY (403 aa)) are cytoplasmic. One can recognise a PAS domain in the interval 41–70 (VIYCNDGFCELCGYSRAEVMQRPCTCDFLH). In terms of domain architecture, PAC spans 92–144 (RKVEIAFYRKDGSCFLCLVDVVPVKNEDGAVIMFILNFEVVMEKDMVGSPARD). The tract at residues 233-312 (ALVGSGSPPA…ASTGAMHPLR (80 aa)) is disordered. The residue at position 239 (serine 239) is a Phosphoserine. The segment covering 258-269 (PDGSGSSCSLAR) has biased composition (polar residues). Residues serine 283, serine 284, serine 320, and serine 351 each carry the phosphoserine modification. A helical transmembrane segment spans residues 404–424 (SPFKAVWDWLILLLVIYTAVF). Residues 425–450 (TPYSAAFLLKETEEGSQAPDCGYACQ) lie on the Extracellular side of the membrane. Residues 451–471 (PLAVVDLIVDIMFIVDILINF) traverse the membrane as a helical segment. Residues 472–495 (RTTYVNANEEVVSHPGRIAVHYFK) lie on the Cytoplasmic side of the membrane. The helical transmembrane segment at 496 to 516 (GWFLIDMVAAIPFDLLIFGSG) threads the bilayer. Over 517-520 (SEEL) the chain is Extracellular. Residues 521-541 (IGLLKTARLLRLVRVARKLDR) traverse the membrane as a helical; Voltage-sensor segment. Residues 542–547 (YSEYGA) lie on the Cytoplasmic side of the membrane. Residues 548-568 (AVLFLLMCTFALIAHWLACIW) traverse the membrane as a helical segment. Residues 569-611 (YAIGNMEQPNMDSHIGWLHNLGDQIGKPYNSSGLGGPSIKDKY) lie on the Extracellular side of the membrane. The segment at residues 612–632 (VTALYFTFSSLTSVGFGNVSP) is an intramembrane region (pore-forming). Positions 624–629 (SVGFGN) match the Selectivity filter motif. Residues 633-638 (NTNSEK) are Extracellular-facing. Residues 639 to 659 (IFSICVMLIGSLMYASIFGNV) traverse the membrane as a helical segment. Residues 660-1154 (SAIIQRLYSG…LHRHGSDPGS (495 aa)) lie on the Cytoplasmic side of the membrane. The cNMP-binding domain stretch occupies residues 742 to 842 (PFRGATKGCL…IHRDDLLEVL (101 aa)). The interval 870-985 (GSPGSTELEG…DVEKSSDTCN (116 aa)) is disordered. A phosphoserine mark is found at serine 871 and serine 874. The span at 883–892 (RQRKRKLSFR) shows a compositional bias: basic residues. Over residues 916 to 927 (GPSGRGQQGGPW) the composition is skewed to gly residues. Positions 928–939 (GESLSSGPSSPE) are enriched in low complexity. At arginine 1014 the chain carries Omega-N-methylarginine. Residues 1037–1064 (RGDVESRLDALQRQLNRLETRLSADMAT) adopt a coiled-coil conformation. Residues 1125–1154 (DGPARRLSLPGQLGALTSQPLHRHGSDPGS) are disordered. Residue serine 1132 is modified to Phosphoserine.

This sequence belongs to the potassium channel family. H (Eag) (TC 1.A.1.20) subfamily. Kv11.1/KCNH2 sub-subfamily. In terms of assembly, the potassium channel is probably composed of a homo- or heterotetrameric complex of pore-forming alpha subunits that can associate with modulating beta subunits. Interacts with DNAJB12 and DNAJB14; chaperones DNAJB12 and DNAJB14 promote tetramerization. Heteromultimer with KCNH6/ERG2 and KCNH7/ERG3. Interacts with ALG10B. Forms a stable complex with KCNE1 or KCNE2, and that this heteromultimerization regulates Inward rectifier potassium channel activity. Interacts with CANX. The core-glycosylated, but not the fully glycosylated form interacts with RNF207. Interacts with NDFIP1 and NDFIP2; this interaction decreases the cell membrane expression by targeting KCNH2, through interaction with NEDD4L, for the degradation through the multivesicular bodies (MVBs)-lysosomal pathway. Post-translationally, phosphorylated on serine and threonine residues. Phosphorylation by PKA inhibits ion conduction.

The protein localises to the cell membrane. It catalyses the reaction K(+)(in) = K(+)(out). Pore-forming (alpha) subunit of voltage-gated inwardly rectifying potassium channel. Characterized by unusual gating kinetics by producing relatively small outward currents during membrane depolarization and large inward currents during subsequent repolarization which reflect a rapid inactivation during depolarization and quick recovery from inactivation but slow deactivation (closing) during repolarization. Channel properties are modulated by cAMP and subunit assembly. Forms a stable complex with KCNE1 or KCNE2, and that this heteromultimerization regulates inward rectifier potassium channel activity. The chain is Voltage-gated inwardly rectifying potassium channel KCNH2 from Sus scrofa (Pig).